Consider the following 88-residue polypeptide: Cytochrome c oxidase subunit 6B2 (88 aa).

Residues 29-75 (TRNCYQNFLDYHRCIKTMNRRGKSTQPCEYYFRVYHSLCPISWVQRW) form the CHCH domain. Positions 32–42 (CYQNFLDYHRC) match the Cx9C motif motif. Intrachain disulfides connect C32/C67 and C42/C56. Positions 56–67 (CEYYFRVYHSLC) match the Cx10C motif motif.

It belongs to the cytochrome c oxidase subunit 6B family. Component of the cytochrome c oxidase (complex IV, CIV), a multisubunit enzyme composed of 14 subunits. The complex is composed of a catalytic core of 3 subunits MT-CO1, MT-CO2 and MT-CO3, encoded in the mitochondrial DNA, and 11 supernumerary subunits COX4I1 (or COX4I2), COX5A, COX5B, COX6A2 (or COX6A1), COX6B1 (or COX6B2), COX6C, COX7A1 (or COX7A2), COX7B, COX7C, COX8B and NDUFA4, which are encoded in the nuclear genome. The complex exists as a monomer or a dimer and forms supercomplexes (SCs) in the inner mitochondrial membrane with NADH-ubiquinone oxidoreductase (complex I, CI) and ubiquinol-cytochrome c oxidoreductase (cytochrome b-c1 complex, complex III, CIII), resulting in different assemblies (supercomplex SCI(1)III(2)IV(1) and megacomplex MCI(2)III(2)IV(2)). As to expression, testis specific.

The protein resides in the mitochondrion inner membrane. It participates in energy metabolism; oxidative phosphorylation. Its function is as follows. Component of the cytochrome c oxidase, the last enzyme in the mitochondrial electron transport chain which drives oxidative phosphorylation. The respiratory chain contains 3 multisubunit complexes succinate dehydrogenase (complex II, CII), ubiquinol-cytochrome c oxidoreductase (cytochrome b-c1 complex, complex III, CIII) and cytochrome c oxidase (complex IV, CIV), that cooperate to transfer electrons derived from NADH and succinate to molecular oxygen, creating an electrochemical gradient over the inner membrane that drives transmembrane transport and the ATP synthase. Cytochrome c oxidase is the component of the respiratory chain that catalyzes the reduction of oxygen to water. Electrons originating from reduced cytochrome c in the intermembrane space (IMS) are transferred via the dinuclear copper A center (CU(A)) of subunit 2 and heme A of subunit 1 to the active site in subunit 1, a binuclear center (BNC) formed by heme A3 and copper B (CU(B)). The BNC reduces molecular oxygen to 2 water molecules using 4 electrons from cytochrome c in the IMS and 4 protons from the mitochondrial matrix. This is Cytochrome c oxidase subunit 6B2 (COX6B2) from Bos taurus (Bovine).